A 184-amino-acid chain; its full sequence is 1,6-anhydro-N-acetylmuramyl-L-alanine amidase AmpD (184 aa).

The 142-residue stretch at 30 to 171 (QDISLLVIHY…ISPKRKIDPG (142 aa)) folds into the N-acetylmuramoyl-L-alanine amidase domain. Position 38 (His38) interacts with Zn(2+). Glu120 acts as the Proton acceptor in catalysis. 2 residues coordinate Zn(2+): His159 and Asp169.

Belongs to the N-acetylmuramoyl-L-alanine amidase 2 family. Zn(2+) is required as a cofactor.

It is found in the cytoplasm. The enzyme catalyses Hydrolyzes the link between N-acetylmuramoyl residues and L-amino acid residues in certain cell-wall glycopeptides.. Functionally, involved in cell wall peptidoglycan recycling. Specifically cleaves the amide bond between the lactyl group of N-acetylmuramic acid and the alpha-amino group of the L-alanine in degradation products containing an anhydro N-acetylmuramyl moiety. This chain is 1,6-anhydro-N-acetylmuramyl-L-alanine amidase AmpD (ampD), found in Haemophilus influenzae (strain ATCC 51907 / DSM 11121 / KW20 / Rd).